Here is a 74-residue protein sequence, read N- to C-terminus: Large ribosomal subunit protein bL31 (74 aa).

This sequence belongs to the bacterial ribosomal protein bL31 family. Type A subfamily. As to quaternary structure, part of the 50S ribosomal subunit.

In terms of biological role, binds the 23S rRNA. This Chlorobaculum parvum (strain DSM 263 / NCIMB 8327) (Chlorobium vibrioforme subsp. thiosulfatophilum) protein is Large ribosomal subunit protein bL31.